Reading from the N-terminus, the 627-residue chain is MSVISIVPLASKSCLYKSLMSSTHELKALCRPIATLGMCRRGKSVMASMSTSLTTAVSDDGVQRRIGHHHSNLWDDNFIQSLSSPYGASSYAESAKKLIGEVKEIFNSLSMAAGGLMSPVDDLLQHLSMVDNVERLGIDRHFQTEIKVSLDYVYSYWSEKGIGSGRDIVCTDLNTTALGFRILRLHGYTVFPDVFEHFKDQMGRIACSANHTERQISSILNLFRASLIAFPGEKVMEEAEIFSATYLKEALQTIPVSSLSQEIQYVLQYRWHSNLPRLEARTYIDILQENTKNQMLDVNTKKVLELAKLEFNIFHSLQQNELKSVSRWWKESGFPDLNFIRHRHVEFYTLVSGIDMEPKHSTFRLSFVKMCHLITVLDDMYDTFGTIDELRLFTAAVKRWDPSTTQCLPEYMKGVYTVLYETVNEMAQEAQKSQGRDTLNYVRQALEAYIGAYHKEAEWISSGYLPTFDEYFENGKVSSGHRIATLQPIFMLDIPFPHHVLQEIDFPSNFNDFACSILRLRCDTRCYQADRARGEEASCISCYMKDHPGSTQEDALNHINNMIEETIKKLNWELMKPDNNVPISSKKPAFDISRGLHHFYNYRDGYTVSSNETKNLVIKTVLEPVPM.

A chloroplast-targeting transit peptide spans M1 to L36. Residues D378, D382, and D530 each contribute to the Mg(2+) site. The DDXXD motif motif lies at D378–D382.

It belongs to the terpene synthase family. Tpsd subfamily. Mg(2+) is required as a cofactor. It depends on Mn(2+) as a cofactor.

The protein localises to the plastid. It is found in the chloroplast. The enzyme catalyses (2E)-geranyl diphosphate = (+)-car-3-ene + diphosphate. It participates in terpene metabolism; oleoresin biosynthesis. Its function is as follows. Terpene synthase (TPS) involved in defensive oleoresin formation in conifers in response to insect attack or other injury. The sequence is that of Carene synthase 3, chloroplastic (TPS-3car3) from Picea sitchensis (Sitka spruce).